The sequence spans 492 residues: Catalase isozyme 1 (492 aa).

Active-site residues include histidine 65 and asparagine 138. Tyrosine 348 contributes to the heme binding site.

It belongs to the catalase family. Homotetramer. The cofactor is heme. Scutella, milky endosperm of immature kernels, leaves and epicotyls.

It is found in the peroxisome. The enzyme catalyses 2 H2O2 = O2 + 2 H2O. Occurs in almost all aerobically respiring organisms and serves to protect cells from the toxic effects of hydrogen peroxide. This chain is Catalase isozyme 1 (CAT1), found in Zea mays (Maize).